The following is a 152-amino-acid chain: MSSKLEQLQALLAPVVEGLGYQCWGIEYVSQGKHSVLRIYIDKEGGILVEDCEAVSRQASAILDVEDPISSEYTLEVSSPGMDRPLFTLEQFASHAGEQVKIKLRSPFEGRRNFQGLLRGVEEQDVVVQVDNQEFLLPIDSIDKANIIPSFD.

Belongs to the RimP family.

Its subcellular location is the cytoplasm. Required for maturation of 30S ribosomal subunits. This Pseudomonas putida (strain GB-1) protein is Ribosome maturation factor RimP.